The chain runs to 38 residues: Large ribosomal subunit protein bL36A (38 aa).

Belongs to the bacterial ribosomal protein bL36 family.

The polypeptide is Large ribosomal subunit protein bL36A (Cronobacter sakazakii (strain ATCC BAA-894) (Enterobacter sakazakii)).